A 257-amino-acid chain; its full sequence is uncharacterized protein (257 aa).

An N-terminal signal peptide occupies residues 1-22 (MIHSKRLKMCLCLIILSVFIGA). Cysteine 23 carries N-palmitoyl cysteine lipidation. Cysteine 23 is lipidated: S-diacylglycerol cysteine.

This sequence belongs to the staphylococcal tandem lipoprotein family.

The protein resides in the cell membrane. This is an uncharacterized protein from Staphylococcus aureus (strain MRSA252).